A 359-amino-acid polypeptide reads, in one-letter code: Olfactory receptor 8S1 (359 aa).

Residues 1–25 lie on the Extracellular side of the membrane; the sequence is MALGNHSTITEFLLLGLSADPNIRA. N5 is a glycosylation site (N-linked (GlcNAc...) asparagine). A helical transmembrane segment spans residues 26–46; sequence LLFVLFLGIYLLTIMENLMLL. At 47-54 the chain is on the cytoplasmic side; the sequence is LMIRADSC. A helical transmembrane segment spans residues 55–75; it reads LHKPMYFFLSHLSFVDLCFSS. Residues 76 to 99 are Extracellular-facing; that stretch reads VIVPKMLENLLSQRKTISVEGCLA. C97 and C189 form a disulfide bridge. Residues 100–120 traverse the membrane as a helical segment; the sequence is QVFFVFVTAGTEACLLSGMAY. Topologically, residues 121–139 are cytoplasmic; that stretch reads DRHAAICRPLLYGQIMGKQ. Residues 140-160 form a helical membrane-spanning segment; sequence LYMHLVWGSWGLGFLDALINV. Over 161 to 197 the chain is Extracellular; sequence LLAVNMVFCEAKIIHHYSYEMPSLLPLSCSDISRSLI. The helical transmembrane segment at 198–217 threads the bilayer; the sequence is ALLCSTLLHGLGNFLLVFLS. The Cytoplasmic segment spans residues 218–237; it reads YTRIISTILSISSTSGRSKA. Residues 238-258 form a helical membrane-spanning segment; sequence FSTCSAHLTAVTLYYGSGLLR. At 259–269 the chain is on the extracellular side; it reads HLMPNSGSPIE. The chain crosses the membrane as a helical span at residues 270 to 290; sequence LIFSVQYTVVTPMLNSLIYSL. Topologically, residues 291–359 are cytoplasmic; that stretch reads KNKEVKGERS…ALRAAPTALP (69 aa). The tract at residues 301 to 338 is disordered; sequence LRDSSHLPQLHKGQARWKRPAFTEGRREPGHPELSIPV.

Belongs to the G-protein coupled receptor 1 family.

The protein resides in the cell membrane. Its function is as follows. Odorant receptor. The polypeptide is Olfactory receptor 8S1 (OR8S1) (Homo sapiens (Human)).